Reading from the N-terminus, the 267-residue chain is tRNA pseudouridine synthase A (267 aa).

Aspartate 52 functions as the Nucleophile in the catalytic mechanism. Tyrosine 113 contributes to the substrate binding site.

It belongs to the tRNA pseudouridine synthase TruA family. In terms of assembly, homodimer.

It carries out the reaction uridine(38/39/40) in tRNA = pseudouridine(38/39/40) in tRNA. Functionally, formation of pseudouridine at positions 38, 39 and 40 in the anticodon stem and loop of transfer RNAs. This chain is tRNA pseudouridine synthase A, found in Chlamydia pneumoniae (Chlamydophila pneumoniae).